Consider the following 85-residue polypeptide: Small ribosomal subunit protein bS20 (85 aa).

The disordered stretch occupies residues 1–22; sequence MPQIKSAIKRVKTQNATNKRNA. A compositionally biased stretch (polar residues) spans 13-22; sequence TQNATNKRNA.

This sequence belongs to the bacterial ribosomal protein bS20 family.

Its function is as follows. Binds directly to 16S ribosomal RNA. This is Small ribosomal subunit protein bS20 from Lactobacillus acidophilus (strain ATCC 700396 / NCK56 / N2 / NCFM).